A 95-amino-acid polypeptide reads, in one-letter code: MSVDETTVRRIAHLARIAVTDEEVGPLKGELNAILAFVEQLGAVDVEGVEPMTSVTPMRMKKRADVVNDGGRASDIVANAPETEDNYFLVPKVVE.

This sequence belongs to the GatC family. As to quaternary structure, heterotrimer of A, B and C subunits.

It catalyses the reaction L-glutamyl-tRNA(Gln) + L-glutamine + ATP + H2O = L-glutaminyl-tRNA(Gln) + L-glutamate + ADP + phosphate + H(+). It carries out the reaction L-aspartyl-tRNA(Asn) + L-glutamine + ATP + H2O = L-asparaginyl-tRNA(Asn) + L-glutamate + ADP + phosphate + 2 H(+). Allows the formation of correctly charged Asn-tRNA(Asn) or Gln-tRNA(Gln) through the transamidation of misacylated Asp-tRNA(Asn) or Glu-tRNA(Gln) in organisms which lack either or both of asparaginyl-tRNA or glutaminyl-tRNA synthetases. The reaction takes place in the presence of glutamine and ATP through an activated phospho-Asp-tRNA(Asn) or phospho-Glu-tRNA(Gln). The protein is Aspartyl/glutamyl-tRNA(Asn/Gln) amidotransferase subunit C of Methylorubrum extorquens (strain CM4 / NCIMB 13688) (Methylobacterium extorquens).